The sequence spans 1297 residues: Protein ENHANCED DOWNY MILDEW 2 (1297 aa).

The segment at 222–281 adopts a PHD-type 1; degenerate zinc-finger fold; sequence ESVCAICDNGGEILCCEGSCLRSFHATKKDGEDSLCDSLGFNKMQVEAIQKYFCPNCEHK. Residues C237, C241, C275, C278, C285, C288, C306, C311, H316, C319, C346, and H349 each coordinate Zn(2+). A PHD-type 2; atypical zinc finger spans residues 282 to 352; the sequence is IHQCFICKNL…EYTCPLHKCS (71 aa). The PHD-type 3; degenerate zinc finger occupies 351-417; that stretch reads CSVCENGEVK…RVLIYCQEHE (67 aa). The Nuclear localization signal 1 motif lies at 445–452; it reads QRRILESH. 2 disordered regions span residues 471 to 547 and 562 to 598; these read CGKA…ARDA and TQEPNPVKPGRVIPVDSKHNKTDSIASKEPGSEIPTL. The span at 475-487 shows a compositional bias: low complexity; it reads SKNSFRSSFPSSK. The short motif at 492-499 is the Nuclear localization signal 2 element; it reads TKKHGLVS. A compositionally biased stretch (basic and acidic residues) spans 526-547; that stretch reads KMMEDSREAGKNKLGVKEARDA. 2 short sequence motifs (nuclear localization signal) span residues 610–617 and 979–986; these read MKKATEEI and LKKEGKTK. 2 stretches are compositionally biased toward basic and acidic residues: residues 969 to 990 and 1096 to 1109; these read QSDHLSRRSQLKKEGKTKDYSG and EVSRDRPSSVRTSR. 3 disordered regions span residues 969–1017, 1085–1109, and 1260–1297; these read QSDH…GELS, HGCKVQGTGKPEVSRDRPSSVRTSR, and FPLPPPPPSDFEMSPRGFAPGPNPNYPYMSRSGGWIND.

As to quaternary structure, interacts with WNK8 in nucleus; this interaction is involved in developmental processes regulation but not in RPP7-dependent disease resistance. Interacts with EML1 and EML2 in nucleus. Component of the ASI1-AIPP1-EDM2 (AAE) RNA regulatory complex composed of at least AIPP1/EDM3, ASI1 and EDM2 and may contain CPL2, AIPP2 and AIPP3/BDT1. Binds directly to AIPP1/EDM3. Co-associates with AIPP1/EDM3 to histone H3 lysine 9 dimethylation (H3K9me2)-marked chromatin and transcripts at a critical proximal polyadenylation site of RPP7 to hamper proximal transcript polyadeylation/termination. Phosphorylated by WNK8.

It localises to the nucleus. In terms of biological role, cellular antisilencing factor and regulator of genome DNA methylation patterns involved in the regulation of chromatin states. Together with SUVH4, monitors repressive epigenetic marks H3K27me1, H3K9me2, and prevents DNA-methylation at CHG sites, affecting especially the expression of transposons and developmentally important genes. Collaboratively with ASI1 and AIPP1/EDM3, the AAE complex regulates alternative RNA processing (e.g. alternative splicing) and epigenetic silencing (e.g. H3K9me2) of intronic heterochromatin-containing genes as well as genic heterochromatin-containing genes by promoting distal 3' polyadenylation. Epigenetic reader that binds DNA and contributes to transcriptional transposable element (TE) silencing by modulating levels of the repressive post-translational histone modifications (PHM) H3K9me2. In cv. Columbia, required for RPP7-dependent disease resistance against the Hyaloperonospora arabidopsidis isolate Hiks1, by promoting levels of RPP7 via alternative polyadenylation (APA), resulting from cooption of epigenetic information at the TE insertion locus COPIA-R7. Exhibits a global role in NLR (nucleotide-binding, leucine-rich repeat) defense genes epigenetic (e.g. H3K9me2 hallmarks) expression control; promotes the accumulation of RPP7, RPP4 and some other proteins, but mediates the repression of several other NLR products, probably to compensate for fitness penalties caused by defense mechanisms. Regulates development processes such as the formation of leaf pavement cells, leaf expansion, fertility and flowering. Prevents FLC accumulation to control flowering. Modulates stomatal development by regulating the methylation-mediated silencing of ERECTA receptor genes (e.g. ER, ERL1 and ERL2) and preventing cell divisions. The polypeptide is Protein ENHANCED DOWNY MILDEW 2 (Arabidopsis thaliana (Mouse-ear cress)).